The chain runs to 518 residues: Voltage-gated potassium channel regulatory subunit KCNG2 (518 aa).

Residues 1–214 (MALLTGNADR…DMVENPHSGI (214 aa)) are Cytoplasmic-facing. A helical transmembrane segment spans residues 215–236 (PGKIFACISISFVAITAVSLCI). Over 237–257 (STMPDVREEEDRGECSQKCYD) the chain is Extracellular. The chain crosses the membrane as a helical span at residues 258-279 (IFVLETVCVAWFSFEFLLRSIQ). The Cytoplasmic segment spans residues 280 to 290 (AENKCAFLKTP). The chain crosses the membrane as a helical span at residues 291–311 (LNIIDILAILPFYISLIVDMA). Topologically, residues 312–331 (STKNSSKPGGGAGNKYLERV) are extracellular. A helical; Voltage-sensor transmembrane segment spans residues 332 to 352 (GLVLRFLRALRILYVMRLARH). The Cytoplasmic portion of the chain corresponds to 353–367 (SLGLQTLGLTVRRCT). The chain crosses the membrane as a helical span at residues 368-389 (REFGLLLLFLCVAMALFSPLVY). Topologically, residues 390 to 404 (LAESELGAKQEFTSI) are extracellular. Residues 405–416 (PTSYWWAVISMT) constitute an intramembrane region (helical). A Selectivity filter motif is present at residues 417–422 (TVGYGD). Residues 417 to 424 (TVGYGDMV) lie within the membrane without spanning it. Residues 425–431 (PRSIPGQ) lie on the Extracellular side of the membrane. Residues 432-460 (VVALSSILSGILLMAFPVTSIFHTFSRSY) traverse the membrane as a helical segment. Topologically, residues 461-518 (SELKEQQQRAASRQMHQLEESTKLAGGGSSQWITAASPPDAAREDGRPELDQEAKRSC) are cytoplasmic. The segment at 473–518 (RQMHQLEESTKLAGGGSSQWITAASPPDAAREDGRPELDQEAKRSC) is disordered. The segment covering 501-518 (AAREDGRPELDQEAKRSC) has biased composition (basic and acidic residues).

It belongs to the potassium channel family. G (TC 1.A.1.2) subfamily. Kv6.2/KCNG2 sub-subfamily. Heterodimer with KCNB1.

The protein resides in the cell membrane. In terms of biological role, regulatory alpha-subunit of the voltage-gated potassium (Kv) channel which, when coassembled with KCNB1, can modulate the kinetics and conductance-voltage relationship. Modulates channel activity by shifting the threshold and the half-maximal activation to more negative values. Potassium channel subunit that does not form functional channels by itself. This chain is Voltage-gated potassium channel regulatory subunit KCNG2, found in Gallus gallus (Chicken).